The primary structure comprises 221 residues: Glutathione S-transferase alpha-3 (221 aa).

Residues 3-83 (GKPVLHYFDG…YIATKYNLYG (81 aa)) form the GST N-terminal domain. Lys4 carries the N6-succinyllysine modification. Residues Tyr9, Arg45, 54 to 55 (QV), and 67 to 68 (QT) contribute to the glutathione site. Residues 85–207 (DMKERALIDM…LQPGSQRKPL (123 aa)) form the GST C-terminal domain.

Belongs to the GST superfamily. Alpha family. As to quaternary structure, heterodimer of YC1 and YC2.

The protein localises to the cytoplasm. It catalyses the reaction RX + glutathione = an S-substituted glutathione + a halide anion + H(+). The catalysed reaction is androst-5-ene-3,17-dione = androst-4-ene-3,17-dione. The enzyme catalyses pregn-5-ene-3,20-dione = progesterone. Functionally, conjugation of reduced glutathione to a wide number of exogenous and endogenous hydrophobic electrophiles. Catalyzes isomerization reactions that contribute to the biosynthesis of steroid hormones. Efficiently catalyze obligatory double-bond isomerizations of delta(5)-androstene-3,17-dione and delta(5)-pregnene-3,20-dione, precursors to testosterone and progesterone, respectively. Has substantial activity toward aflatoxin B1-8,9-epoxide. This is Glutathione S-transferase alpha-3 from Rattus norvegicus (Rat).